The following is a 167-amino-acid chain: ATP synthase subunit delta, mitochondrial (167 aa).

The transit peptide at 1-28 (MFRLSNYMLRKSQFPQGLVRAPFGIRGY) directs the protein to the mitochondrion.

Belongs to the ATPase epsilon chain family. As to quaternary structure, F-type ATPases have 2 components, CF(1) - the catalytic core - and CF(0) - the membrane proton channel. CF(1) has five subunits: alpha(3), beta(3), gamma(1), delta(1), epsilon(1). CF(0) has three main subunits: a, b and c.

It is found in the mitochondrion. The protein resides in the mitochondrion inner membrane. Mitochondrial membrane ATP synthase (F(1)F(0) ATP synthase or Complex V) produces ATP from ADP in the presence of a proton gradient across the membrane which is generated by electron transport complexes of the respiratory chain. F-type ATPases consist of two structural domains, F(1) - containing the extramembraneous catalytic core, and F(0) - containing the membrane proton channel, linked together by a central stalk and a peripheral stalk. During catalysis, ATP turnover in the catalytic domain of F(1) is coupled via a rotary mechanism of the central stalk subunits to proton translocation. Part of the complex F(1) domain and of the central stalk which is part of the complex rotary element. Rotation of the central stalk against the surrounding alpha(3)beta(3) subunits leads to hydrolysis of ATP in three separate catalytic sites on the beta subunits. This Schizosaccharomyces pombe (strain 972 / ATCC 24843) (Fission yeast) protein is ATP synthase subunit delta, mitochondrial (atp16).